Here is a 175-residue protein sequence, read N- to C-terminus: Large ribosomal subunit protein uL22y (175 aa).

Residues 153–163 (EKEEPVKKEPE) show a composition bias toward basic and acidic residues. Residues 153-175 (EKEEPVKKEPETQLAAKSKKSAA) are disordered.

The protein belongs to the universal ribosomal protein uL22 family.

This chain is Large ribosomal subunit protein uL22y (RPL17B), found in Arabidopsis thaliana (Mouse-ear cress).